The primary structure comprises 460 residues: Muscarinic acetylcholine receptor M1 (460 aa).

At Met1–Pro22 the chain is on the extracellular side. Asn2 and Asn12 each carry an N-linked (GlcNAc...) asparagine glycan. The helical transmembrane segment at Trp23 to Ile48 threads the bilayer. The Cytoplasmic portion of the chain corresponds to Ser49 to Tyr62. The chain crosses the membrane as a helical span at residues Phe63–Thr84. Residues Tyr85 to Thr95 lie on the Extracellular side of the membrane. A helical transmembrane segment spans residues Leu96–Phe121. Cysteines 98 and 178 form a disulfide. Over Asp122–Ala142 the chain is Cytoplasmic. A helical transmembrane segment spans residues Ala143–Trp164. Residues Gln165–Gln185 lie on the Extracellular side of the membrane. A helical transmembrane segment spans residues Pro186–Trp209. The Cytoplasmic segment spans residues Arg210 to Thr366. Disordered stretches follow at residues Leu225–Pro256, Trp274–Gly297, and Glu310–Lys351. Thr230 is subject to Phosphothreonine. Residues Ser238–Gly247 show a composition bias toward low complexity. Residues Arg328 to Pro343 show a composition bias toward basic residues. Residues Leu367–Phe390 traverse the membrane as a helical segment. The Extracellular portion of the chain corresponds to Cys391–Glu397. The chain crosses the membrane as a helical span at residues Thr398 to Leu420. The Cytoplasmic portion of the chain corresponds to Cys421–Cys460. Thr428 is subject to Phosphothreonine. Ser451 is modified (phosphoserine). Thr455 is modified (phosphothreonine). Phosphoserine is present on Ser457.

Belongs to the G-protein coupled receptor 1 family. Muscarinic acetylcholine receptor subfamily. CHRM1 sub-subfamily. As to quaternary structure, interacts with GPRASP2. Interacts with TMEM147.

The protein localises to the cell membrane. Its subcellular location is the postsynaptic cell membrane. Functionally, the muscarinic acetylcholine receptor mediates various cellular responses, including inhibition of adenylate cyclase, breakdown of phosphoinositides and modulation of potassium channels through the action of G proteins. Primary transducing effect is Pi turnover. The chain is Muscarinic acetylcholine receptor M1 (CHRM1) from Homo sapiens (Human).